A 228-amino-acid polypeptide reads, in one-letter code: AA9 family lytic polysaccharide monooxygenase A (228 aa).

Positions 1 and 86 each coordinate Cu(2+). Residue His1 is modified to Methylhistidine. 2 disulfides stabilise this stretch: Cys56–Cys178 and Cys97–Cys101. A glycan (N-linked (GlcNAc...) asparagine) is linked at Asn138. His164 and Gln173 together coordinate O2. Tyr175 provides a ligand contact to Cu(2+).

It belongs to the polysaccharide monooxygenase AA9 family. Cu(2+) is required as a cofactor. The catalytically essential N-terminal histidine His-22 is post-translationally modified by methylation to prevent protonation of the histidine side chain, and protect the critical active site of the enzyme from oxidative damage.

It is found in the secreted. It catalyses the reaction [(1-&gt;4)-beta-D-glucosyl]n+m + reduced acceptor + O2 = 4-dehydro-beta-D-glucosyl-[(1-&gt;4)-beta-D-glucosyl]n-1 + [(1-&gt;4)-beta-D-glucosyl]m + acceptor + H2O.. With respect to regulation, small amounts of H(2)O(2) boost LPMO activity, while higher amounts lead to inactivation of the enzyme. Functionally, lytic polysaccharide monooxygenase (LPMO) that depolymerizes crystalline and amorphous polysaccharides via the oxidation of scissile alpha- or beta-(1-4)-glycosidic bonds, yielding C1 and C4 oxidation product. Catalysis by LPMOs requires the reduction of the active-site copper from Cu(II) to Cu(I) by a reducing agent and H(2)O(2) or O(2) as a cosubstrate. Is able to cleave cellulose and xylan to produce C1- and C4-oxidized products. The sequence is that of AA9 family lytic polysaccharide monooxygenase A from Thermoascus aurantiacus.